A 332-amino-acid chain; its full sequence is Caffeoylshikimate esterase (332 aa).

Over residues M1–P13 the composition is skewed to low complexity. The segment at M1 to M26 is disordered. The active-site Nucleophile is the S147. Catalysis depends on charge relay system residues D268 and H298.

Belongs to the AB hydrolase superfamily. Monoacylglycerol lipase family. Interacts with ACBP2. As to expression, expressed in vasculature of roots and leaves, stems, flowers and siliques.

It localises to the cell membrane. It carries out the reaction 5-O-[(E)-caffeoyl]-shikimate + H2O = shikimate + (E)-caffeate + H(+). In terms of biological role, esterase involved in the biosynthesis of lignin. Hydrolyzes caffeoylshikimate into caffeate and shikimate. Together with 4-coumarate--CoA ligase (4CL), acts on an alternative reaction for the formation of caffeoyl-CoA and bypasses the second reaction of shikimate O-hydroxycinnamoyltransferase (HST). Also accepts 4-coumaroylshikimate as substrate, but with lower activity. According to PubMed:20345607 and PubMed:22915575, possesses monoacylglycerol O-acyltransferase, monoacylglycerol lipase and lysophospholipase activities in vitro. With the association of ACBP2, may promote the degradation of lysophosphatidylcholine and detoxify the peroxidized membrane in response to cadmium-induced oxidative stress. However these results require additional confirmation in vivo. This chain is Caffeoylshikimate esterase (CSE), found in Arabidopsis thaliana (Mouse-ear cress).